A 100-amino-acid polypeptide reads, in one-letter code: Large ribosomal subunit protein uL23 (100 aa).

It belongs to the universal ribosomal protein uL23 family. In terms of assembly, part of the 50S ribosomal subunit. Contacts protein L29, and trigger factor when it is bound to the ribosome.

Its function is as follows. One of the early assembly proteins it binds 23S rRNA. One of the proteins that surrounds the polypeptide exit tunnel on the outside of the ribosome. Forms the main docking site for trigger factor binding to the ribosome. The polypeptide is Large ribosomal subunit protein uL23 (Lactobacillus acidophilus (strain ATCC 700396 / NCK56 / N2 / NCFM)).